The primary structure comprises 242 residues: UPF0273 protein MJ1359 (242 aa).

The KaiC domain maps to 2 to 242; that stretch reads KRVKTGIPGM…VYPDKVLKLR (241 aa). 29-36 is a binding site for ATP; the sequence is GGPGTGKS.

This sequence belongs to the UPF0273 family.

This Methanocaldococcus jannaschii (strain ATCC 43067 / DSM 2661 / JAL-1 / JCM 10045 / NBRC 100440) (Methanococcus jannaschii) protein is UPF0273 protein MJ1359.